Reading from the N-terminus, the 147-residue chain is Myosin-2 essential light chain (147 aa).

EF-hand domains are found at residues aspartate 7–asparagine 42, aspartate 80–lysine 115, and lysine 115–glycine 147. Serine 30 carries the post-translational modification Phosphoserine. Residues aspartate 93, aspartate 95, serine 97, tyrosine 99, and glutamate 104 each contribute to the Ca(2+) site.

In terms of assembly, myosin is a hexamer of 2 heavy chains and 4 light chains.

The protein is Myosin-2 essential light chain (Mlc-c) of Drosophila melanogaster (Fruit fly).